Reading from the N-terminus, the 98-residue chain is Dehydrogenase acuH (98 aa).

It participates in secondary metabolite biosynthesis. Functionally, dehydrogenase; part of the gene cluster that mediates the biosynthesis of aculins. The pathway begins with the synthesis of 6-methylsalicylic acid by the polyketide synthase (PKS) acuA via condensation of acetate and malonate units. The 6-methylsalicylic acid decarboxylase acuB then catalyzes the decarboxylation of 6-methylsalicylic acid to yield m-cresol (also known as 3-methylphenol). These first reactions occur in the cytosol. The intermediate m-cresol is then transported into the endoplasmic reticulum where the cytochrome P450 monooxygenase acuC converts it to m-hydroxybenzyl alcohol, which is further converted to gentisyl alcohol by the cytochrome P450 monooxygenase acuD. Gentisyl alcohol is further oxidized by the oxidoreductase acuE that probably catalyzes hydroxylation of the aromatic ring. The aromatic system might then be opened by oxidation through a Baeyer-Villiger type of oxidation, which could be catalyzed by acuF, with the carboxylic acid at C-1 subsequently reduced to an aldehyde by acuG. Subsequently, a hemiacetal is formed, before the dehydrogenase acuH would reduce the double bond between C-4 and C-6. Finally, keto-enol tautomerism results in formation of aculinic acid, which exists as two diastereomers (both R/S configurations at C-1) by non-enzymatic hemiacetal formation. The carboxypeptidase acuI could be involved in the linking of aculinic acid to an aculene A moiety produced by the aculene biosynthesis cluster and which leads to the production of aculin A. AcuI may also be involved in the attachment of proline to aculinic acid to form epi-aculins A and B. This is Dehydrogenase acuH from Aspergillus aculeatus (strain ATCC 16872 / CBS 172.66 / WB 5094).